Consider the following 399-residue polypeptide: Keratin, type I cytoskeletal 19 (399 aa).

Residues 1–78 are head; the sequence is MTSYSYRQSS…ATSDGLLAGN (78 aa). Arg7 is modified (omega-N-methylarginine). Residues Ser14 and Ser22 each carry the phosphoserine modification. Position 24 is an asymmetric dimethylarginine; alternate (Arg24). An Omega-N-methylarginine; alternate modification is found at Arg24. Arg32 carries the post-translational modification Omega-N-methylarginine. Ser35 and Ser40 each carry phosphoserine. Residues Arg43 and Arg51 each carry the omega-N-methylarginine modification. Ser57 and Ser71 each carry phosphoserine. A coil 1A region spans residues 79 to 114; the sequence is EKLTMQNLNDRLASYLEKVRALEEANGDLEVKIRDW. An IF rod domain is found at 79 to 390; sequence EKLTMQNLND…NLLEGQDAYF (312 aa). Residues 115–132 form a linker 1 region; sequence YQKQGPGPARDYSHYFKT. The segment at 133-224 is coil 1B; the sequence is IEDLRDQILG…KNHEEEMSVL (92 aa). Positions 225-247 are linker 12; the sequence is KGQVGGQVSVEVDSAPGIDLAKI. The necessary for interaction with PNN stretch occupies residues 243–389; it reads DLAKILSDMR…RNLLEGQDAY (147 aa). The coil 2 stretch occupies residues 248–386; that stretch reads LSDMRSQYEV…ATYRNLLEGQ (139 aa). Thr322 bears the Phosphothreonine mark. Positions 387–399 are rod-like helical tail; it reads DAYFNDLSLAKAL. Ser394 is subject to Phosphoserine.

The protein belongs to the intermediate filament family. Heterotetramer of two type I and two type II keratins. Interacts with PNN and the actin-binding domain of DMD.

Its function is as follows. Involved in the organization of myofibers. Together with KRT8, helps to link the contractile apparatus to dystrophin at the costameres of striated muscle. This Bos taurus (Bovine) protein is Keratin, type I cytoskeletal 19 (KRT19).